A 145-amino-acid polypeptide reads, in one-letter code: Arginine repressor (145 aa).

The protein belongs to the ArgR family.

It localises to the cytoplasm. Its pathway is amino-acid biosynthesis; L-arginine biosynthesis [regulation]. Regulates arginine biosynthesis genes. The sequence is that of Arginine repressor from Solibacter usitatus (strain Ellin6076).